A 211-amino-acid polypeptide reads, in one-letter code: Probable transcriptional regulatory protein SgaR (211 aa).

The region spanning 10–126 (EVSIVDQNPV…VLLEAVVSVA (117 aa)) is the Response regulatory domain. A 4-aspartylphosphate modification is found at Asp15. Residues 141 to 206 (NHDPLESLTA…MAVALHVSIN (66 aa)) form the HTH luxR-type domain. Residues 165–184 (NLQIAARTGISRNTVKYHLK) constitute a DNA-binding region (H-T-H motif).

Not known. Could act on the sgaA gene expression. This Hyphomicrobium methylovorum protein is Probable transcriptional regulatory protein SgaR (sgaR).